The sequence spans 67 residues: Ferredoxin (67 aa).

4Fe-4S ferredoxin-type domains follow at residues 3-31 (WKVS…MNDE) and 36-67 (PKVE…IEEA). [4Fe-4S] cluster is bound by residues cysteine 12, aspartate 15, and cysteine 18. A disulfide bridge connects residues cysteine 22 and cysteine 49. Residue cysteine 57 coordinates [4Fe-4S] cluster.

Requires [4Fe-4S] cluster as cofactor. [3Fe-4S] cluster serves as cofactor.

Functionally, ferredoxins are iron-sulfur proteins that transfer electrons in a wide variety of metabolic reactions. The polypeptide is Ferredoxin (fdxA) (Pyrococcus abyssi (strain GE5 / Orsay)).